The following is a 305-amino-acid chain: Protoheme IX farnesyltransferase 2 (305 aa).

Helical transmembrane passes span 38 to 58 (LITT…SFLG), 60 to 80 (LNTV…SCAV), 115 to 135 (ILLI…AAVI), 157 to 177 (INTV…WTAV), 181 to 201 (IGVV…PHFL), 236 to 256 (VACL…IVIL), and 285 to 305 (FVYS…FTLF).

The protein belongs to the UbiA prenyltransferase family. Protoheme IX farnesyltransferase subfamily. Interacts with CtaA.

The protein localises to the cell membrane. The enzyme catalyses heme b + (2E,6E)-farnesyl diphosphate + H2O = Fe(II)-heme o + diphosphate. It functions in the pathway porphyrin-containing compound metabolism; heme O biosynthesis; heme O from protoheme: step 1/1. In terms of biological role, converts heme B (protoheme IX) to heme O by substitution of the vinyl group on carbon 2 of heme B porphyrin ring with a hydroxyethyl farnesyl side group. This Bacillus velezensis (strain DSM 23117 / BGSC 10A6 / LMG 26770 / FZB42) (Bacillus amyloliquefaciens subsp. plantarum) protein is Protoheme IX farnesyltransferase 2.